The following is a 328-amino-acid chain: Malate dehydrogenase (328 aa).

12–18 (GAAGQIA) is a binding site for NAD(+). Substrate contacts are provided by Arg-93 and Arg-99. Residues Asn-106, Gln-113, and 130 to 132 (VGN) each bind NAD(+). Residues Asn-132 and Arg-163 each contribute to the substrate site. His-188 functions as the Proton acceptor in the catalytic mechanism.

The protein belongs to the LDH/MDH superfamily. MDH type 2 family.

It catalyses the reaction (S)-malate + NAD(+) = oxaloacetate + NADH + H(+). Functionally, catalyzes the reversible oxidation of malate to oxaloacetate. In Burkholderia cenocepacia (strain ATCC BAA-245 / DSM 16553 / LMG 16656 / NCTC 13227 / J2315 / CF5610) (Burkholderia cepacia (strain J2315)), this protein is Malate dehydrogenase.